The sequence spans 436 residues: Antilisterial bacteriocin subtilosin biosynthesis protein AlbD (436 aa).

The next 10 membrane-spanning stretches (helical) occupy residues 27-47, 55-75, 113-133, 134-154, 164-184, 187-207, 240-260, 270-290, 315-335, and 395-415; these read IAAG…QAGI, TYII…SVTS, LFFF…GAQT, LFWL…GVVL, LMFL…ALMP, TIPL…PVFL, AMLL…FQMM, IYIV…LYSI, FYSG…GFIS, and AILA…LVIV.

It localises to the cell membrane. Its function is as follows. Involved in the production of the bacteriocin subtilosin. Required for immunity to subtilosin. In Bacillus subtilis (strain 168), this protein is Antilisterial bacteriocin subtilosin biosynthesis protein AlbD (albD).